Here is a 424-residue protein sequence, read N- to C-terminus: Methylenetetrahydrofolate--tRNA-(uracil-5-)-methyltransferase TrmFO 1 (424 aa).

8 to 13 provides a ligand contact to FAD; it reads GAGLSG.

The protein belongs to the MnmG family. TrmFO subfamily. The cofactor is FAD.

The protein resides in the cytoplasm. The catalysed reaction is uridine(54) in tRNA + (6R)-5,10-methylene-5,6,7,8-tetrahydrofolate + NADH + H(+) = 5-methyluridine(54) in tRNA + (6S)-5,6,7,8-tetrahydrofolate + NAD(+). It catalyses the reaction uridine(54) in tRNA + (6R)-5,10-methylene-5,6,7,8-tetrahydrofolate + NADPH + H(+) = 5-methyluridine(54) in tRNA + (6S)-5,6,7,8-tetrahydrofolate + NADP(+). In terms of biological role, catalyzes the folate-dependent formation of 5-methyl-uridine at position 54 (M-5-U54) in all tRNAs. The chain is Methylenetetrahydrofolate--tRNA-(uracil-5-)-methyltransferase TrmFO 1 from Mycoplasma mycoides subsp. mycoides SC (strain CCUG 32753 / NCTC 10114 / PG1).